The primary structure comprises 644 residues: Exoribonuclease 2 (644 aa).

Residues 189–516 form the RNB domain; that stretch reads REDLTALNFV…NHRLLKAMIT (328 aa). In terms of domain architecture, S1 motif spans 561–643; the sequence is DTRFTAEIID…ETRNVIARPV (83 aa).

It belongs to the RNR ribonuclease family. RNase II subfamily.

The protein resides in the cytoplasm. It catalyses the reaction Exonucleolytic cleavage in the 3'- to 5'-direction to yield nucleoside 5'-phosphates.. In terms of biological role, involved in mRNA degradation. Hydrolyzes single-stranded polyribonucleotides processively in the 3' to 5' direction. This is Exoribonuclease 2 from Yersinia pseudotuberculosis serotype IB (strain PB1/+).